The sequence spans 394 residues: MTQLETRTEPMVVNFGPHHPSMHGVLRLVVTLDGEDVVDCEPVIGYLHRGMEKIAENRTNVMFVPYVSRMDYAAGMFYEAVVVNAPEKLANIPVPKRASYIRVLMLELNRIANHLLWLGPFLADVGAQTPFFYIFREREMIYDLWEAATGQRLINNNYFRIGGVAADLPWGWLEKCRDFCDWFAPKIDEYEKLITNNPIFRRRIEGLGTIETKDAINWSLSGPMLRASGVPWDLRKVDHYECYDDFDWQVAWEKEGDCFARYRVRIEEMRQSLKILRQACDMIPGGPTENLEAKRLNEGKGSEAAGFDFQYVAKKVAPTFKIPNGELYTRLESGKGEIGVFLQGNNDVTPWRFKIRAADSNNLQILPHILKGHKVADIMAILGSIDVIMGSVDR.

It belongs to the complex I 49 kDa subunit family. As to quaternary structure, NDH-1 can be composed of about 15 different subunits; different subcomplexes with different compositions have been identified which probably have different functions.

Its subcellular location is the cellular thylakoid membrane. The catalysed reaction is a plastoquinone + NADH + (n+1) H(+)(in) = a plastoquinol + NAD(+) + n H(+)(out). It carries out the reaction a plastoquinone + NADPH + (n+1) H(+)(in) = a plastoquinol + NADP(+) + n H(+)(out). In terms of biological role, NDH-1 shuttles electrons from an unknown electron donor, via FMN and iron-sulfur (Fe-S) centers, to quinones in the respiratory and/or the photosynthetic chain. The immediate electron acceptor for the enzyme in this species is believed to be plastoquinone. Couples the redox reaction to proton translocation, and thus conserves the redox energy in a proton gradient. Cyanobacterial NDH-1 also plays a role in inorganic carbon-concentration. This is NAD(P)H-quinone oxidoreductase subunit H from Synechococcus sp. (strain CC9902).